An 88-amino-acid chain; its full sequence is Small ribosomal subunit protein uS15 (88 aa).

The protein belongs to the universal ribosomal protein uS15 family. As to quaternary structure, part of the 30S ribosomal subunit. Forms a bridge to the 50S subunit in the 70S ribosome, contacting the 23S rRNA.

Functionally, one of the primary rRNA binding proteins, it binds directly to 16S rRNA where it helps nucleate assembly of the platform of the 30S subunit by binding and bridging several RNA helices of the 16S rRNA. Forms an intersubunit bridge (bridge B4) with the 23S rRNA of the 50S subunit in the ribosome. This chain is Small ribosomal subunit protein uS15, found in Thermoanaerobacter pseudethanolicus (strain ATCC 33223 / 39E) (Clostridium thermohydrosulfuricum).